We begin with the raw amino-acid sequence, 113 residues long: Hydrogenase maturation factor HypA (113 aa).

Position 2 (His-2) interacts with Ni(2+). 4 residues coordinate Zn(2+): Cys-73, Cys-76, Cys-89, and Cys-92.

Belongs to the HypA/HybF family.

Its function is as follows. Involved in the maturation of [NiFe] hydrogenases. Required for nickel insertion into the metal center of the hydrogenase. The protein is Hydrogenase maturation factor HypA of Albidiferax ferrireducens (strain ATCC BAA-621 / DSM 15236 / T118) (Rhodoferax ferrireducens).